The primary structure comprises 200 residues: Glutathione S-transferase 1-1 (200 aa).

In terms of domain architecture, GST N-terminal spans 1-73 (GSSPCRSVIM…YLVEKYGKTD (73 aa)). Glutathione contacts are provided by residues Ser2, 43–45 (HTI), and 57–59 (ESR). One can recognise a GST C-terminal domain in the interval 79–200 (CPKKRAVINQ…AGCLEFKKFF (122 aa)).

Belongs to the GST superfamily. Theta family. In terms of assembly, homodimer.

The enzyme catalyses RX + glutathione = an S-substituted glutathione + a halide anion + H(+). It carries out the reaction 1,1,1-trichloro-2,2-bis(4-chlorophenyl)ethane = 1,1-dichloro-2,2-bis(4-chlorophenyl)ethylene + chloride + H(+). Its function is as follows. Conjugation of reduced glutathione to a wide number of exogenous and endogenous hydrophobic electrophiles. Has DDT dehydrochlorinase activity. In Drosophila mauritiana (Fruit fly), this protein is Glutathione S-transferase 1-1 (GstD1).